The following is a 373-amino-acid chain: Lipoyl amidotransferase LIPT1, mitochondrial (373 aa).

The N-terminal 25 residues, 1-25 (MLIPLSMKNCFRLLCQHKVPAAGFK), are a transit peptide targeting the mitochondrion. The region spanning 57 to 243 (LEGKPILFLW…EYAAHHQVDG (187 aa)) is the BPL/LPL catalytic domain. (R)-lipoyl-5'-AMP-binding residues include Y107, K151, K161, and T179.

This sequence belongs to the LplA family.

It localises to the mitochondrion. The enzyme catalyses (R)-lipoyl-5'-AMP + L-lysyl-[lipoyl-carrier protein] = N(6)-[(R)-lipoyl]-L-lysyl-[lipoyl-carrier protein] + AMP + 2 H(+). It catalyses the reaction N(6)-[(R)-lipoyl]-L-lysyl-[glycine-cleavage complex H protein] + L-lysyl-[lipoyl-carrier protein] = L-lysyl-[glycine-cleavage complex H protein] + N(6)-[(R)-lipoyl]-L-lysyl-[lipoyl-carrier protein]. The protein operates within protein modification; protein lipoylation via exogenous pathway; protein N(6)-(lipoyl)lysine from lipoate: step 2/2. Functionally, lipoyl amidotransferase that catalyzes the transfer of lipoyl moieties from lipoyl-protein H of the glycine cleavage system (lipoyl-GCSH) to E2 subunits of the pyruvate dehydrogenase complex (PDCE2). Unable to catalyze the transfer of octanoyl from octanoyl-GCSH to PDCE2. In vitro, it is also able to catalyze the transfer of the lipoyl group from lipoyl-AMP to the specific lysine residue of lipoyl domains of lipoate-dependent enzymes but this reaction may not be physiologically relevant. This chain is Lipoyl amidotransferase LIPT1, mitochondrial, found in Mus musculus (Mouse).